A 192-amino-acid chain; its full sequence is Bifunctional protein PyrR (192 aa).

Substrate is bound by residues 49 to 50 (SG), R90, 111 to 119 (DDVLFSGRT), R144, and V168. The PRPP-binding motif lies at 107–119 (VILVDDVLFSGRT).

This sequence belongs to the purine/pyrimidine phosphoribosyltransferase family. PyrR subfamily.

It catalyses the reaction UMP + diphosphate = 5-phospho-alpha-D-ribose 1-diphosphate + uracil. Regulates the transcription of the pyrimidine nucleotide (pyr) operon in response to exogenous pyrimidines. Functionally, also displays a weak uracil phosphoribosyltransferase activity which is not physiologically significant. This Corynebacterium glutamicum (strain ATCC 13032 / DSM 20300 / JCM 1318 / BCRC 11384 / CCUG 27702 / LMG 3730 / NBRC 12168 / NCIMB 10025 / NRRL B-2784 / 534) protein is Bifunctional protein PyrR.